The chain runs to 239 residues: Ribonuclease PH (239 aa).

Phosphate contacts are provided by residues R87 and 125 to 127; that span reads GTR.

It belongs to the RNase PH family. As to quaternary structure, homohexameric ring arranged as a trimer of dimers.

The catalysed reaction is tRNA(n+1) + phosphate = tRNA(n) + a ribonucleoside 5'-diphosphate. Phosphorolytic 3'-5' exoribonuclease that plays an important role in tRNA 3'-end maturation. Removes nucleotide residues following the 3'-CCA terminus of tRNAs; can also add nucleotides to the ends of RNA molecules by using nucleoside diphosphates as substrates, but this may not be physiologically important. Probably plays a role in initiation of 16S rRNA degradation (leading to ribosome degradation) during starvation. The sequence is that of Ribonuclease PH from Saccharophagus degradans (strain 2-40 / ATCC 43961 / DSM 17024).